We begin with the raw amino-acid sequence, 152 residues long: SUZ RNA-binding domain-containing (152 aa).

Residue Met1 is modified to N-acetylmethionine. The tract at residues 30–152 (TQKESRKSKS…DGSQGFKQRR (123 aa)) is disordered. Phosphoserine is present on residues Ser37, Ser39, and Ser51. An SUZ domain is found at 42 to 107 (KVPIVIQDDS…ARKRILGSAS (66 aa)). Over residues 66 to 81 (PTSNGVVSSPNSTSRP) the composition is skewed to polar residues. Basic and acidic residues predominate over residues 89 to 100 (AQREAEYAEARK). A phosphoserine mark is found at Ser105 and Ser107. Residues 111–152 (EQEKPILDRPTRISQPEDSRQPNNVIRQPLGPDGSQGFKQRR) form the SUZ-C domain. Positions 113–130 (EKPILDRPTRISQPEDSR) are enriched in basic and acidic residues.

The protein belongs to the SZRD1 family.

This is SUZ RNA-binding domain-containing (SZRD1) from Homo sapiens (Human).